Here is a 215-residue protein sequence, read N- to C-terminus: MHTVKLLCVVFSCLCAVAWASSDRQPCHSPPLISGTMKVVSTGGHDLASGEFSYDSKANKFRFVEDAAHANKTSHTDVLVHFEEGTLYEIDSKNESCKKETLQFRKHLMEIPPDATHESEIYMGSPSITEQGLRVRVWSGKLPELHAHYSLSITSCGCLPVSGSYYGDKKDLLFSFFGVETEVDDLQVFVPPAYCEGVAFEEAPDDHSFFDLFHD.

Residues 1 to 20 (MHTVKLLCVVFSCLCAVAWA) form the signal peptide. N-linked (GlcNAc...) asparagine glycosylation is found at Asn-71 and Asn-94.

It belongs to the ependymin family. Forms disulfide-linked dimers. Post-translationally, different glycosylation variants are known as EPD-beta and EPD-gamma. Binds calcium through the terminal sialic acids. As to expression, EPDs are synthesized in the meninx and secreted in the cerebrospinal fluid.

The protein localises to the secreted. May play a role in neural plasticity. May be involved during axon regeneration. This Carassius auratus (Goldfish) protein is Ependymin-2 (epd2).